A 183-amino-acid polypeptide reads, in one-letter code: Gamma-crystallin N (183 aa).

Beta/gamma crystallin 'Greek key' domains are found at residues 6-46 (GKIT…RVES), 47-89 (GAWV…RPVG), 95-136 (FRID…KVYG), and 138-180 (GAWV…RRVL).

The protein belongs to the beta/gamma-crystallin family. Monomer. As to expression, primordially eye-specific. Present in lens nucleus. In the retina, expression in observed in the outer plexiform layer (containing photoreceptors axons and synapses) and photoreceptor outer segments (at protein level). Also detected in the auditory hindbrain where it is highly expressed in the medial nucleus of the trapezoid body, but also present in other nuclei of the superior olivary complex.

Its function is as follows. Crystallins are the dominant structural components of the vertebrate eye lens. Also plays an important role for integrity and function of auditory nuclei. This is Gamma-crystallin N from Mus musculus (Mouse).